The following is a 343-amino-acid chain: Methionine import ATP-binding protein MetN (343 aa).

Residues 2–241 (IKLSNITKVF…PKTPLAQKFI (240 aa)) form the ABC transporter domain. Residue 38 to 45 (GASGAGKS) participates in ATP binding.

Belongs to the ABC transporter superfamily. Methionine importer (TC 3.A.1.24) family. The complex is composed of two ATP-binding proteins (MetN), two transmembrane proteins (MetI) and a solute-binding protein (MetQ).

Its subcellular location is the cell inner membrane. It carries out the reaction L-methionine(out) + ATP + H2O = L-methionine(in) + ADP + phosphate + H(+). The catalysed reaction is D-methionine(out) + ATP + H2O = D-methionine(in) + ADP + phosphate + H(+). In terms of biological role, part of the ABC transporter complex MetNIQ involved in methionine import. Responsible for energy coupling to the transport system. The chain is Methionine import ATP-binding protein MetN from Shigella boydii serotype 4 (strain Sb227).